The sequence spans 235 residues: uncharacterized protein (235 aa).

2 disordered regions span residues 60-96 (SSNRSMSIDSLTGKKRPHDISFQNMNSSMPSSTQKKT) and 192-235 (LNTS…YDSF). A compositionally biased stretch (polar residues) spans 80–93 (SFQNMNSSMPSSTQ). Acidic residues predominate over residues 197–214 (SEDDTESIVETDYSEEEK).

The protein belongs to the asfivirus DP238L family.

This is an uncharacterized protein from Ornithodoros (relapsing fever ticks).